The sequence spans 239 residues: 1-(5-phosphoribosyl)-5-[(5-phosphoribosylamino)methylideneamino] imidazole-4-carboxamide isomerase (239 aa).

The active-site Proton acceptor is aspartate 8. Aspartate 129 acts as the Proton donor in catalysis.

The protein belongs to the HisA/HisF family.

Its subcellular location is the cytoplasm. It catalyses the reaction 1-(5-phospho-beta-D-ribosyl)-5-[(5-phospho-beta-D-ribosylamino)methylideneamino]imidazole-4-carboxamide = 5-[(5-phospho-1-deoxy-D-ribulos-1-ylimino)methylamino]-1-(5-phospho-beta-D-ribosyl)imidazole-4-carboxamide. It functions in the pathway amino-acid biosynthesis; L-histidine biosynthesis; L-histidine from 5-phospho-alpha-D-ribose 1-diphosphate: step 4/9. This is 1-(5-phosphoribosyl)-5-[(5-phosphoribosylamino)methylideneamino] imidazole-4-carboxamide isomerase from Bacillus thuringiensis subsp. konkukian (strain 97-27).